The following is a 282-amino-acid chain: Structure-specific endonuclease subunit slx1 (282 aa).

A GIY-YIG domain is found at 7 to 97 (GFYGVYLLFC…RLTHVPRKTK (91 aa)). The SLX1-type zinc-finger motif lies at 191 to 243 (CRVCYERVQDKDDSLHCFHPGCTLTAHIMCLAKLFLLNEPQNLIPVEGLCPSC).

This sequence belongs to the SLX1 family. Forms a heterodimer with slx4. The cofactor is a divalent metal cation.

It is found in the nucleus. Catalytic subunit of the slx1-slx4 structure-specific endonuclease that resolves DNA secondary structures generated during DNA repair and recombination. Has endonuclease activity towards branched DNA substrates, introducing single-strand cuts in duplex DNA close to junctions with ss-DNA. The polypeptide is Structure-specific endonuclease subunit slx1 (slx1a) (Xenopus laevis (African clawed frog)).